The following is a 231-amino-acid chain: Protein FMP52, mitochondrial (231 aa).

The transit peptide at 1 to 44 (MNGLVLGATGLCGGGFLRHAQEAPQFSKVYAILRRELPFPATDK) directs the protein to the mitochondrion.

Belongs to the FMP52 family.

It localises to the mitochondrion outer membrane. This is Protein FMP52, mitochondrial (FMP52) from Saccharomyces cerevisiae (strain ATCC 204508 / S288c) (Baker's yeast).